A 174-amino-acid polypeptide reads, in one-letter code: Regenerating islet-derived protein 3-gamma (174 aa).

Residues 1–26 (MLPRITITIMSWMLLSCLMLLSQVQG) form the signal peptide. The propeptide occupies 27–37 (EVAKKDAPSSR). Disulfide bonds link cysteine 40/cysteine 51, cysteine 68/cysteine 170, and cysteine 145/cysteine 162. Residues 47 to 171 (YGSYCYALFS…CNLELPYVCK (125 aa)) form the C-type lectin domain. The interval 103–118 (WIGLHDPTLGYEPNRG) is sufficient to activate EXTL3. Residue histidine 107 participates in Zn(2+) binding. Residues 114–116 (EPN) carry the EPN motif. Zn(2+)-binding residues include glutamate 121 and histidine 144.

In terms of assembly, forms a hexameric membrane-permeabilizing oligomeric pore on membrane phospholipids. The hexamer is formed by three dimers related by helical symmetry. Forms filaments, filamentation traps pore complexes and limits damage to host cells. Interacts with EXTL3. Proteolytic processing by trypsin removes an inhibitory N-terminal propeptide and is essential for peptidoglycan binding and antibacterial activity. Predominantly expressed in the small intestine, including Paneth cells (at protein level). Hardly detectable in the colon (at protein level). Highly expressed in the lung epithelium during methicillin-resistant S.aureus infection and allergic airway inflammation (at protein level). Skin injury increases its epidermal expression. Also expressed in the pancreas. Expressed by nocireceptors.

It localises to the secreted. The protein resides in the cytoplasm. With respect to regulation, lipopolysaccharide inhibits pore-forming activity, explaining why is bactericidal for Gram-positive but not Gram-negative bacteria. Bactericidal C-type lectin which acts exclusively against Gram-positive bacteria and mediates bacterial killing by binding to surface-exposed carbohydrate moieties of peptidoglycan. Restricts bacterial colonization of the intestinal epithelial surface and consequently limits activation of adaptive immune responses by the microbiota. Functionally, acts as a hormone in response to different stimuli like anti-inflammatory signals, such as IL17A, or gut microbiome. Is secreted by different cell types to activate its receptor EXTL3 and induce cell specific signaling pathways. Induced by IL17A in keratinocytes, regulates keratinocyte proliferation and differentiation after skin injury. In parallel, inhibits skin inflammation through the inhibition of inflammatory cytokines such as IL6 and TNF. Induced by IL22 in lung epithelial cells, inhibits cytokine production and regulates allergic airway inflammation. Induced in small intestine by inulin-enriched diet and Lactobacillus gasseri enriched microbiome, plays a role in the improvement of gut barrier function, the regulation of energy balance and glucose levels. Modulates microbiota composition in duodenal contents. Produced by nociceptor in response to endotoxins, prevents endotoxic death by targeting kynurenine pathway in microglia. In terms of biological role, has bacteriostatic activity. Its function is as follows. Has bactericidal activity against L.monocytogenes and methicillin-resistant S.aureus. This chain is Regenerating islet-derived protein 3-gamma, found in Mus musculus (Mouse).